A 189-amino-acid polypeptide reads, in one-letter code: ATP synthase subunit delta (189 aa).

This sequence belongs to the ATPase delta chain family. As to quaternary structure, F-type ATPases have 2 components, F(1) - the catalytic core - and F(0) - the membrane proton channel. F(1) has five subunits: alpha(3), beta(3), gamma(1), delta(1), epsilon(1). F(0) has three main subunits: a(1), b(2) and c(10-14). The alpha and beta chains form an alternating ring which encloses part of the gamma chain. F(1) is attached to F(0) by a central stalk formed by the gamma and epsilon chains, while a peripheral stalk is formed by the delta and b chains.

The protein resides in the cell inner membrane. Functionally, f(1)F(0) ATP synthase produces ATP from ADP in the presence of a proton or sodium gradient. F-type ATPases consist of two structural domains, F(1) containing the extramembraneous catalytic core and F(0) containing the membrane proton channel, linked together by a central stalk and a peripheral stalk. During catalysis, ATP synthesis in the catalytic domain of F(1) is coupled via a rotary mechanism of the central stalk subunits to proton translocation. This protein is part of the stalk that links CF(0) to CF(1). It either transmits conformational changes from CF(0) to CF(1) or is implicated in proton conduction. This is ATP synthase subunit delta from Methylorubrum populi (strain ATCC BAA-705 / NCIMB 13946 / BJ001) (Methylobacterium populi).